Reading from the N-terminus, the 164-residue chain is DNA-binding protein inhibitor ID-1 (164 aa).

One can recognise a bHLH domain in the interval 46–98; that stretch reads LPALLDEQQVNVLLYDMNGCYSRLKELVPTLPQNRKVSKVEILQHVIDYIRDL. Positions 91–104 match the Nuclear export signal motif; it reads VIDYIRDLQLELNS.

Heterodimer with other HLH proteins. Interacts with COPS5, IFI204, GATA4, NKX2-5, CLOCK and BMAL1. Isoform Short can form homodimers. Post-translationally, phosphorylated in vitro by PKA and PKC.

It is found in the cytoplasm. Its subcellular location is the nucleus. In terms of biological role, transcriptional regulator (lacking a basic DNA binding domain) which negatively regulates the basic helix-loop-helix (bHLH) transcription factors by forming heterodimers and inhibiting their DNA binding and transcriptional activity. Implicated in regulating a variety of cellular processes, including cellular growth, senescence, differentiation, apoptosis, angiogenesis, and neoplastic transformation. Inhibits skeletal muscle and cardiac myocyte differentiation. Regulates the circadian clock by repressing the transcriptional activator activity of the CLOCK-BMAL1 heterodimer. The protein is DNA-binding protein inhibitor ID-1 (Id1) of Rattus norvegicus (Rat).